A 485-amino-acid chain; its full sequence is Glucagon receptor (485 aa).

A signal peptide spans 1 to 26; that stretch reads MPLTQLHCPHLLLLLLVLSCLPEAPS. Topologically, residues 27–137 are extracellular; sequence AQVMDFLFEK…EIEVQKGVAK (111 aa). Cystine bridges form between Cys44/Cys68, Cys59/Cys101, and Cys82/Cys122. N-linked (GlcNAc...) asparagine glycosylation is found at Asn47, Asn60, Asn75, Asn79, and Asn118. A helical membrane pass occupies residues 138–162; sequence MYSSQQVMYTVGYSLSLGALLLALV. At 163–174 the chain is on the cytoplasmic side; it reads ILLGLRKLHCTR. Residues 175–199 traverse the membrane as a helical segment; the sequence is NYIHGNLFASFVLKAGSVLVIDWLL. At 200–226 the chain is on the extracellular side; the sequence is KTRYSQKIGDDLSVSVWLSDGAMAGCR. An intrachain disulfide couples Cys225 to Cys295. A helical membrane pass occupies residues 227-250; that stretch reads VATVIMQYGIIANYCWLLVEGVYL. Residues 251 to 264 lie on the Cytoplasmic side of the membrane; that stretch reads YSLLSLATFSERSF. A helical membrane pass occupies residues 265–286; sequence FSLYLGIGWGAPLLFVIPWVVV. Residues 287–304 lie on the Extracellular side of the membrane; it reads KCLFENVQCWTSNDNMGF. Residues 305–327 form a helical membrane-spanning segment; sequence WWILRIPVFLALLINFFIFVHII. The Cytoplasmic portion of the chain corresponds to 328-351; the sequence is HLLVAKLRAHQMHYADYKFRLARS. Residues 351–354 are important for allosteric inhibitor binding; the sequence is STLT. The helical transmembrane segment at 352–370 threads the bilayer; it reads TLTLIPLLGVHEVVFAFVT. Topologically, residues 371–382 are extracellular; it reads DEHAQGTLRSTK. Residues 383-403 form a helical membrane-spanning segment; it reads LFFDLFLSSFQGLLVAVLYCF. Over 404-485 the chain is Cytoplasmic; it reads LNKEVQAELM…SLPRLADSPT (82 aa). The segment covering 457 to 475 has biased composition (polar residues); it reads AGSSSGTGCVPSMETSLAS. Residues 457 to 485 are disordered; the sequence is AGSSSGTGCVPSMETSLASSLPRLADSPT. 2 positions are modified to phosphoserine: Ser460 and Ser476.

This sequence belongs to the G-protein coupled receptor 2 family. Post-translationally, ligand-binding promotes phosphorylation of serine residues in the C-terminal cytoplasmic domain. Phosphorylation is important for receptor endocytosis after ligand-binding. As to expression, expressed predominantly in liver, kidney, adrenal, lung and stomach, while lower levels of expression are detected in brown and white adipose tissue, cerebellum, duodenum and heart.

Its subcellular location is the cell membrane. G-protein coupled receptor for glucagon that plays a central role in the regulation of blood glucose levels and glucose homeostasis. Regulates the rate of hepatic glucose production by promoting glycogen hydrolysis and gluconeogenesis. Plays an important role in mediating the responses to fasting. Ligand binding causes a conformation change that triggers signaling via guanine nucleotide-binding proteins (G proteins) and modulates the activity of down-stream effectors, such as adenylate cyclase. Promotes activation of adenylate cyclase. Besides, plays a role in signaling via a phosphatidylinositol-calcium second messenger system. This Mus musculus (Mouse) protein is Glucagon receptor (Gcgr).